We begin with the raw amino-acid sequence, 288 residues long: Formamidopyrimidine-DNA glycosylase (288 aa).

P2 serves as the catalytic Schiff-base intermediate with DNA. The Proton donor role is filled by E3. The Proton donor; for beta-elimination activity role is filled by K59. Residues H93, R112, and K168 each contribute to the DNA site. An FPG-type zinc finger spans residues 254–288 (NVYGRGGEPCKRCGAPIKRVVVGGRSTHYCATCQR). R278 serves as the catalytic Proton donor; for delta-elimination activity.

It belongs to the FPG family. As to quaternary structure, monomer. Requires Zn(2+) as cofactor.

It carries out the reaction Hydrolysis of DNA containing ring-opened 7-methylguanine residues, releasing 2,6-diamino-4-hydroxy-5-(N-methyl)formamidopyrimidine.. It catalyses the reaction 2'-deoxyribonucleotide-(2'-deoxyribose 5'-phosphate)-2'-deoxyribonucleotide-DNA = a 3'-end 2'-deoxyribonucleotide-(2,3-dehydro-2,3-deoxyribose 5'-phosphate)-DNA + a 5'-end 5'-phospho-2'-deoxyribonucleoside-DNA + H(+). Functionally, involved in base excision repair of DNA damaged by oxidation or by mutagenic agents. Acts as a DNA glycosylase that recognizes and removes damaged bases. Has a preference for oxidized purines, such as 7,8-dihydro-8-oxoguanine (8-oxoG). Has AP (apurinic/apyrimidinic) lyase activity and introduces nicks in the DNA strand. Cleaves the DNA backbone by beta-delta elimination to generate a single-strand break at the site of the removed base with both 3'- and 5'-phosphates. In Corynebacterium jeikeium (strain K411), this protein is Formamidopyrimidine-DNA glycosylase.